An 81-amino-acid chain; its full sequence is Photosystem I iron-sulfur center (81 aa).

4Fe-4S ferredoxin-type domains follow at residues 2–31 and 37–68; these read AHTV…MVPW and GQIA…IRVY. Cys-11, Cys-14, Cys-17, Cys-21, Cys-48, Cys-51, Cys-54, and Cys-58 together coordinate [4Fe-4S] cluster.

The cyanobacterial PSI reaction center is composed of one copy each of PsaA,B,C,D,E,F,I,J,K,L,M and X, and forms trimeric complexes. Requires [4Fe-4S] cluster as cofactor.

The protein localises to the cellular thylakoid membrane. It catalyses the reaction reduced [plastocyanin] + hnu + oxidized [2Fe-2S]-[ferredoxin] = oxidized [plastocyanin] + reduced [2Fe-2S]-[ferredoxin]. In terms of biological role, apoprotein for the two 4Fe-4S centers FA and FB of photosystem I (PSI); essential for photochemical activity. FB is the terminal electron acceptor of PSI, donating electrons to ferredoxin. The C-terminus interacts with PsaA/B/D and helps assemble the protein into the PSI complex. Required for binding of PsaD and PsaE to PSI. PSI is a plastocyanin/cytochrome c6-ferredoxin oxidoreductase, converting photonic excitation into a charge separation, which transfers an electron from the donor P700 chlorophyll pair to the spectroscopically characterized acceptors A0, A1, FX, FA and FB in turn. This Synechococcus elongatus protein is Photosystem I iron-sulfur center (psaC).